The chain runs to 172 residues: 3-hydroxydecanoyl-[acyl-carrier-protein] dehydratase (172 aa).

Residue His-71 is part of the active site.

Belongs to the thioester dehydratase family. FabA subfamily. As to quaternary structure, homodimer.

The protein localises to the cytoplasm. The enzyme catalyses a (3R)-hydroxyacyl-[ACP] = a (2E)-enoyl-[ACP] + H2O. It carries out the reaction (3R)-hydroxydecanoyl-[ACP] = (2E)-decenoyl-[ACP] + H2O. It catalyses the reaction (2E)-decenoyl-[ACP] = (3Z)-decenoyl-[ACP]. The protein operates within lipid metabolism; fatty acid biosynthesis. Functionally, necessary for the introduction of cis unsaturation into fatty acids. Catalyzes the dehydration of (3R)-3-hydroxydecanoyl-ACP to E-(2)-decenoyl-ACP and then its isomerization to Z-(3)-decenoyl-ACP. Can catalyze the dehydratase reaction for beta-hydroxyacyl-ACPs with saturated chain lengths up to 16:0, being most active on intermediate chain length. This Brucella abortus (strain S19) protein is 3-hydroxydecanoyl-[acyl-carrier-protein] dehydratase.